The sequence spans 101 residues: uncharacterized protein (101 aa).

In terms of biological role, may regulate the expression of phage structural components with protein P13. This is an uncharacterized protein from Pseudoalteromonas phage PM2 (Bacteriophage PM2).